We begin with the raw amino-acid sequence, 154 residues long: Basic phospholipase A2 PC20 (154 aa).

An N-terminal signal peptide occupies residues 1–21 (MYPAHLLVLLAVCVSLLGASA). A propeptide spanning residues 22–27 (ISPRPL) is cleaved from the precursor. Disulfide bonds link Cys-38-Cys-98, Cys-54-Cys-143, Cys-56-Cys-72, Cys-71-Cys-125, Cys-78-Cys-118, Cys-87-Cys-111, and Cys-105-Cys-116. Ca(2+)-binding residues include Tyr-55, Ser-57, and Gly-59. Residue His-75 is part of the active site. A Ca(2+)-binding site is contributed by Asp-76. Asp-119 is an active-site residue.

The protein belongs to the phospholipase A2 family. Group I subfamily. D49 sub-subfamily. The cofactor is Ca(2+). As to expression, expressed by the venom gland.

The protein localises to the secreted. It carries out the reaction a 1,2-diacyl-sn-glycero-3-phosphocholine + H2O = a 1-acyl-sn-glycero-3-phosphocholine + a fatty acid + H(+). Snake venom phospholipase A2 (PLA2) that inhibits neuromuscular transmission by blocking acetylcholine release from the nerve termini. PLA2 catalyzes the calcium-dependent hydrolysis of the 2-acyl groups in 3-sn-phosphoglycerides. This chain is Basic phospholipase A2 PC20, found in Laticauda colubrina (Yellow-lipped sea krait).